Here is a 303-residue protein sequence, read N- to C-terminus: N-acetyl-D-glucosamine kinase (303 aa).

ATP is bound by residues 4–11 (GFDIGGTK) and 133–140 (GVGGGLIF). Zn(2+) contacts are provided by histidine 157, cysteine 177, cysteine 179, and cysteine 184.

It belongs to the ROK (NagC/XylR) family. NagK subfamily.

It carries out the reaction N-acetyl-D-glucosamine + ATP = N-acetyl-D-glucosamine 6-phosphate + ADP + H(+). It functions in the pathway cell wall biogenesis; peptidoglycan recycling. In terms of biological role, catalyzes the phosphorylation of N-acetyl-D-glucosamine (GlcNAc) derived from cell-wall degradation, yielding GlcNAc-6-P. The protein is N-acetyl-D-glucosamine kinase of Escherichia coli O157:H7.